The chain runs to 29 residues: Cytochrome b6-f complex subunit 8 (29 aa).

The chain crosses the membrane as a helical span at residues I3 to V23.

This sequence belongs to the PetN family. The 4 large subunits of the cytochrome b6-f complex are cytochrome b6, subunit IV (17 kDa polypeptide, PetD), cytochrome f and the Rieske protein, while the 4 small subunits are PetG, PetL, PetM and PetN. The complex functions as a dimer.

The protein localises to the plastid. Its subcellular location is the chloroplast thylakoid membrane. Functionally, component of the cytochrome b6-f complex, which mediates electron transfer between photosystem II (PSII) and photosystem I (PSI), cyclic electron flow around PSI, and state transitions. This Nicotiana tomentosiformis (Tobacco) protein is Cytochrome b6-f complex subunit 8.